Reading from the N-terminus, the 65-residue chain is Large ribosomal subunit protein bL31 (65 aa).

Residues Cys-16, Cys-18, Cys-36, and Cys-39 each contribute to the Zn(2+) site.

This sequence belongs to the bacterial ribosomal protein bL31 family. Type A subfamily. As to quaternary structure, part of the 50S ribosomal subunit. The cofactor is Zn(2+).

Its function is as follows. Binds the 23S rRNA. The protein is Large ribosomal subunit protein bL31 of Campylobacter jejuni subsp. doylei (strain ATCC BAA-1458 / RM4099 / 269.97).